The primary structure comprises 547 residues: MVKKHQNSKMGNTNHFGHLKSFVGGNVVALGAGTPYLFSFYAPQLLSKCHIPVSASSKLSFSLTIGSSLMGILAGIVVDRSPKLSCLIGSMCVFIAYLILNLCYKHEWSSTFLISLSLVLIGYGSVSGFYASVKCANTNFPQHRGTAGAFPVSLYGLSGMVFSYLCSKLFGENIEHVFIFLMVACGCMILVGYFSLDIFSNAEGDDASIKEWELQKSRETDDNIVPLYENSNDYIGSPVRSSSPATYETYALSDNFQETSEFFALEDRQLSNRPLLSPSSPHTKYDFEDENTSKNTVGENSAQKSMRLHVFQSLKSSTFIGYYIVLGILQGVGLMYIYSVGFMVQAQVSTPPLNQLPINAEKIQSLQVTLLSLLSFCGRLSSGPISDFLVKKFKAQRLWNIVIASLLVFLASNKISHDFSSIEDPSLRASKSFKNISVCSAIFGYSFGVLFGTFPSIVADRFGTNGYSTLWGVLTTGGVFSVSVFTDILGRDFKANTGDDDGNCKKGVLCYSYTFMVTKYCAAFNLLFVLGIIGYTYYRRRATANSL.

Topologically, residues Met1–Ser21 are extracellular. The chain crosses the membrane as a helical span at residues Phe22 to Ala42. The Cytoplasmic segment spans residues Pro43–Lys58. A helical transmembrane segment spans residues Leu59–Asp79. At Arg80–Lys83 the chain is on the extracellular side. The helical transmembrane segment at Leu84–Tyr104 threads the bilayer. Residues Lys105–Ser110 lie on the Cytoplasmic side of the membrane. The chain crosses the membrane as a helical span at residues Thr111 to Ala131. Over Ser132–Arg144 the chain is Extracellular. A helical transmembrane segment spans residues Gly145–Leu165. The Cytoplasmic segment spans residues Cys166–Glu175. The helical transmembrane segment at His176–Leu196 threads the bilayer. The Extracellular portion of the chain corresponds to Asp197–Tyr323. Ser237 is modified (phosphoserine). Positions Leu275–Asn300 are disordered. The chain crosses the membrane as a helical span at residues Ile324–Val344. At Gln345 to Leu398 the chain is on the cytoplasmic side. Residues Trp399 to Phe419 traverse the membrane as a helical segment. Topologically, residues Ser420–Ser437 are extracellular. A helical membrane pass occupies residues Val438–Val458. Residues Ala459–Thr469 are Cytoplasmic-facing. The chain crosses the membrane as a helical span at residues Leu470–Gly490. Residues Arg491–Thr514 lie on the Extracellular side of the membrane. Residues Phe515–Tyr535 form a helical membrane-spanning segment. Topologically, residues Thr536–Leu547 are cytoplasmic.

Its subcellular location is the membrane. This is an uncharacterized protein from Saccharomyces cerevisiae (strain ATCC 204508 / S288c) (Baker's yeast).